Here is a 410-residue protein sequence, read N- to C-terminus: Multifunctional CCA protein (410 aa).

ATP-binding residues include G8 and R11. 2 residues coordinate CTP: G8 and R11. Mg(2+) is bound by residues E21 and D23. ATP-binding residues include R91, R137, and R140. 3 residues coordinate CTP: R91, R137, and R140. The HD domain occupies 228–329; the sequence is TGIHSLMTLR…VKLLEQVDAF (102 aa).

The protein belongs to the tRNA nucleotidyltransferase/poly(A) polymerase family. Bacterial CCA-adding enzyme type 1 subfamily. Monomer. Can also form homodimers and oligomers. The cofactor is Mg(2+). Ni(2+) is required as a cofactor.

The catalysed reaction is a tRNA precursor + 2 CTP + ATP = a tRNA with a 3' CCA end + 3 diphosphate. The enzyme catalyses a tRNA with a 3' CCA end + 2 CTP + ATP = a tRNA with a 3' CCACCA end + 3 diphosphate. Functionally, catalyzes the addition and repair of the essential 3'-terminal CCA sequence in tRNAs without using a nucleic acid template. Adds these three nucleotides in the order of C, C, and A to the tRNA nucleotide-73, using CTP and ATP as substrates and producing inorganic pyrophosphate. tRNA 3'-terminal CCA addition is required both for tRNA processing and repair. Also involved in tRNA surveillance by mediating tandem CCA addition to generate a CCACCA at the 3' terminus of unstable tRNAs. While stable tRNAs receive only 3'-terminal CCA, unstable tRNAs are marked with CCACCA and rapidly degraded. This Legionella pneumophila (strain Lens) protein is Multifunctional CCA protein.